Here is a 248-residue protein sequence, read N- to C-terminus: Thioredoxin-like protein AAED1, chloroplastic (248 aa).

A chloroplast-targeting transit peptide spans 1–52; sequence MAIALSSSSTITSITLQPKLKTIHGLGTVLPGYSVKSHFRSVSLRRSAVVVS. N-acetylalanine is present on A53.

The protein belongs to the peroxiredoxin-like PRXL2 family. PRXL2C subfamily.

It is found in the plastid. The protein resides in the chloroplast. This Arabidopsis thaliana (Mouse-ear cress) protein is Thioredoxin-like protein AAED1, chloroplastic.